A 406-amino-acid polypeptide reads, in one-letter code: Multifunctional CCA protein (406 aa).

Residues Gly8 and Arg11 each contribute to the ATP site. The CTP site is built by Gly8 and Arg11. 2 residues coordinate Mg(2+): Asp21 and Asp23. ATP is bound by residues Arg91, Arg138, and Arg141. Positions 91, 138, and 141 each coordinate CTP. An HD domain is found at 229–331; sequence TGIHQEMVSD…LELLGRCDAL (103 aa).

The protein belongs to the tRNA nucleotidyltransferase/poly(A) polymerase family. Bacterial CCA-adding enzyme type 1 subfamily. In terms of assembly, monomer. Can also form homodimers and oligomers. The cofactor is Mg(2+). Ni(2+) serves as cofactor.

It carries out the reaction a tRNA precursor + 2 CTP + ATP = a tRNA with a 3' CCA end + 3 diphosphate. The catalysed reaction is a tRNA with a 3' CCA end + 2 CTP + ATP = a tRNA with a 3' CCACCA end + 3 diphosphate. Its function is as follows. Catalyzes the addition and repair of the essential 3'-terminal CCA sequence in tRNAs without using a nucleic acid template. Adds these three nucleotides in the order of C, C, and A to the tRNA nucleotide-73, using CTP and ATP as substrates and producing inorganic pyrophosphate. tRNA 3'-terminal CCA addition is required both for tRNA processing and repair. Also involved in tRNA surveillance by mediating tandem CCA addition to generate a CCACCA at the 3' terminus of unstable tRNAs. While stable tRNAs receive only 3'-terminal CCA, unstable tRNAs are marked with CCACCA and rapidly degraded. In Stenotrophomonas maltophilia (strain R551-3), this protein is Multifunctional CCA protein.